Reading from the N-terminus, the 412-residue chain is Serine--tRNA ligase (412 aa).

Residue 228-230 coordinates L-serine; it reads TAE. Position 259 to 261 (259 to 261) interacts with ATP; it reads RKE. Glutamate 282 lines the L-serine pocket. 346-349 provides a ligand contact to ATP; that stretch reads EISS. Serine 380 provides a ligand contact to L-serine.

The protein belongs to the class-II aminoacyl-tRNA synthetase family. Type-1 seryl-tRNA synthetase subfamily. Homodimer. The tRNA molecule binds across the dimer.

The protein localises to the cytoplasm. The enzyme catalyses tRNA(Ser) + L-serine + ATP = L-seryl-tRNA(Ser) + AMP + diphosphate + H(+). The catalysed reaction is tRNA(Sec) + L-serine + ATP = L-seryl-tRNA(Sec) + AMP + diphosphate + H(+). Its pathway is aminoacyl-tRNA biosynthesis; selenocysteinyl-tRNA(Sec) biosynthesis; L-seryl-tRNA(Sec) from L-serine and tRNA(Sec): step 1/1. Its function is as follows. Catalyzes the attachment of serine to tRNA(Ser). Is also able to aminoacylate tRNA(Sec) with serine, to form the misacylated tRNA L-seryl-tRNA(Sec), which will be further converted into selenocysteinyl-tRNA(Sec). The polypeptide is Serine--tRNA ligase (Aliarcobacter butzleri (strain RM4018) (Arcobacter butzleri)).